The primary structure comprises 559 residues: Sesquiterpene synthase TPS3 (559 aa).

Positions 275, 312, 316, 453, and 456 each coordinate (2E,6E)-farnesyl diphosphate. Mg(2+)-binding residues include Asp-312 and Asp-316. Positions 312–316 match the DDXXD motif motif; that stretch reads DDTYD. Positions 456, 460, and 464 each coordinate Mg(2+).

It belongs to the terpene synthase family. Tpsa subfamily. In terms of assembly, monomer. The cofactor is Mg(2+). Highly expressed in glandular trichomes. Expressed in roots and leaves.

The protein localises to the cytoplasm. The catalysed reaction is (2E,6E)-farnesyl diphosphate = (+)-(R)-germacrene A + diphosphate. It participates in secondary metabolite biosynthesis; terpenoid biosynthesis. Its function is as follows. Sesquiterpene synthase involved in the biosynthesis of volatile compounds. Mediates the conversion of (2E,6E)-farnesyl diphosphate (FPP) into (+)-(R)-germacrene A. In Xanthium strumarium (Rough cocklebur), this protein is Sesquiterpene synthase TPS3.